Here is a 54-residue protein sequence, read N- to C-terminus: ITTVDCSDYPKPVCSLEYMPLCGSDNKTYGNKCNFCNAVADSNGTLTLSHFGKC.

In terms of domain architecture, Kazal-like spans 4–54 (VDCSDYPKPVCSLEYMPLCGSDNKTYGNKCNFCNAVADSNGTLTLSHFGKC). Disulfide bonds link cysteine 6/cysteine 36, cysteine 14/cysteine 33, and cysteine 22/cysteine 54. Asparagine 43 carries an N-linked (GlcNAc...) asparagine glycan.

It is found in the secreted. In Guira guira (Guira cuckoo), this protein is Ovomucoid.